A 307-amino-acid chain; its full sequence is Thiohydrolase apmlB (307 aa).

Belongs to the polyketide transferase af380 family.

Thiohydrolase; part of the gene cluster that mediates the biosynthesis of phaeospelide A, a fungal polyene macrolide with a 34-membered macrolactone ring and an all-trans conjugated hexaene structure. The HR-PKS ApmlA uses acetyl-CoA and malonyl-CoA as its starter and extender units, respectively, and provides the large carbon framework in phaeospelide via 16 cycles of polyketide chain elongation, which is the largest number identified in fungal iterative PKSs thus far. During round 1, the KR domain reduces beta -ketone to an L-oriented hydroxy group, while during later rounds, it provides hydroxy groups in the D-configuration. The characteristic conjugated hexaene moiety is built during the later rounds (10-15), when the KR and DH domains are at work but ER is off. Phylogenetic analysis of the DH domain suggests that a polyene formation is programmed in the DH domain. Finally, the mature ACP-tethered carbon chain is transferred to the serine residue of the thiohydrolase apmlB, followed by intramolecular macrolactonization, generating phaeospelide A. When one elongation cycle during rounds 7-9 is skipped, phaeospelide B is biosynthesized instead. This chain is Thiohydrolase apmlB, found in Arthrinium phaeospermum (Gymnosporium phaeospermum).